Consider the following 189-residue polypeptide: UPF0301 protein Cgl3084/cg3414 (189 aa).

Belongs to the UPF0301 (AlgH) family.

This Corynebacterium glutamicum (strain ATCC 13032 / DSM 20300 / JCM 1318 / BCRC 11384 / CCUG 27702 / LMG 3730 / NBRC 12168 / NCIMB 10025 / NRRL B-2784 / 534) protein is UPF0301 protein Cgl3084/cg3414.